The following is a 181-amino-acid chain: Peptidyl-tRNA hydrolase (181 aa).

Position 14 (tyrosine 14) interacts with tRNA. The active-site Proton acceptor is histidine 19. Tyrosine 62, asparagine 64, and asparagine 108 together coordinate tRNA.

Belongs to the PTH family. In terms of assembly, monomer.

It localises to the cytoplasm. The catalysed reaction is an N-acyl-L-alpha-aminoacyl-tRNA + H2O = an N-acyl-L-amino acid + a tRNA + H(+). Its function is as follows. Hydrolyzes ribosome-free peptidyl-tRNAs (with 1 or more amino acids incorporated), which drop off the ribosome during protein synthesis, or as a result of ribosome stalling. Catalyzes the release of premature peptidyl moieties from peptidyl-tRNA molecules trapped in stalled 50S ribosomal subunits, and thus maintains levels of free tRNAs and 50S ribosomes. This is Peptidyl-tRNA hydrolase from Campylobacter jejuni subsp. doylei (strain ATCC BAA-1458 / RM4099 / 269.97).